A 459-amino-acid polypeptide reads, in one-letter code: FBD-associated F-box protein At5g27750 (459 aa).

The region spanning 4 to 50 (FDRISELPESLITQILLCLPTKDSVKTSVLSTRWKNLWLNVPGLDLT) is the F-box domain. The 53-residue stretch at 374-426 (TEELNLINVPRCIVSTLECVEIKGLFEWEEEEMKIARYFLENAAVLKKLTMSF) folds into the FBD domain.

The polypeptide is FBD-associated F-box protein At5g27750 (Arabidopsis thaliana (Mouse-ear cress)).